The following is a 579-amino-acid chain: DELLA protein RGA2 (579 aa).

The interval 1–31 (MKRDLHQFQGPPDTRFPNHGTANTGSSSKDK) is disordered. The DELLA motif signature appears at 45–49 (DELLA). Low complexity-rich tracts occupy residues 149-162 (SSSS…NSQS) and 174-183 (SLVTGTTVTT). The tract at residues 149–183 (SSSSSNQAGDNSQSTKRLKSCSSPDSLVTGTTVTT) is disordered. The GRAS domain maps to 205-574 (VDSQENGVRL…RPLITTSAWK (370 aa)). A leucine repeat I (LRI) region spans residues 212–266 (VRLVHALMACAEAIQNNDLSIAEALVKQIGFLAVSQAGAMRKVATYFAEALARRI). The VHIID stretch occupies residues 285–350 (QMHFYETCPY…GGPPVFRLTG (66 aa)). A VHIID motif is present at residues 316-320 (VHVID). The tract at residues 364-396 (EVGCKLAQLAEAIHVEFEYRGFVANSLADLDAS) is leucine repeat II (LRII). A PFYRE region spans residues 408–495 (VAVNSVFELH…EVYLGKQICN (88 aa)). The LXXLL motif motif lies at 416–420 (LHKLL). The SAW stretch occupies residues 498–574 (ACEGPDRVER…RPLITTSAWK (77 aa)).

The protein belongs to the GRAS family. DELLA subfamily. Post-translationally, phosphorylated. Ubiquitinated. Upon GA application it is ubiquitinated, leading to its subsequent degradation.

It localises to the nucleus. Probable transcriptional regulator that acts as a repressor of the gibberellin (GA) signaling pathway. Probably acts by participating in large multiprotein complexes that represses transcription of GA-inducible genes. Upon GA application, it is degraded by the proteasome, allowing the GA signaling pathway. The chain is DELLA protein RGA2 (RGA2) from Brassica campestris (Field mustard).